A 236-amino-acid polypeptide reads, in one-letter code: Orotidine 5'-phosphate decarboxylase (236 aa).

Substrate is bound by residues Asp16, Lys38, 65–74 (DLKYHDIPNT), Thr124, Arg185, Gln194, Gly214, and Arg215. Lys67 functions as the Proton donor in the catalytic mechanism.

The protein belongs to the OMP decarboxylase family. Type 1 subfamily. As to quaternary structure, homodimer.

It catalyses the reaction orotidine 5'-phosphate + H(+) = UMP + CO2. The protein operates within pyrimidine metabolism; UMP biosynthesis via de novo pathway; UMP from orotate: step 2/2. Catalyzes the decarboxylation of orotidine 5'-monophosphate (OMP) to uridine 5'-monophosphate (UMP). This chain is Orotidine 5'-phosphate decarboxylase, found in Hydrogenovibrio crunogenus (strain DSM 25203 / XCL-2) (Thiomicrospira crunogena).